Here is a 623-residue protein sequence, read N- to C-terminus: Heterogeneous nuclear ribonucleoprotein Q (623 aa).

At Ala2 the chain carries N-acetylalanine. Ser159 is subject to Phosphoserine. 3 RRM domains span residues 162–241, 243–325, and 338–408; these read TEIF…ISVA, NRLF…WADP, and KVLF…FAKP. Lys168 participates in a covalent cross-link: Glycyl lysine isopeptide (Lys-Gly) (interchain with G-Cter in SUMO2). Lys221 carries the post-translational modification N6-acetyllysine. The residue at position 363 (Lys363) is an N6-acetyllysine. Tyr373 bears the Phosphotyrosine mark. An interaction with APOBEC1 region spans residues 400 to 561; that stretch reads NIEIVFAKPP…GARGGRGGNV (162 aa). Arg444 carries the asymmetric dimethylarginine; by PRMT1; alternate modification. Omega-N-methylarginine; by PRMT1; alternate is present on Arg444. Repeat copies occupy residues 448–450, 451–453, 460–464, 469–472, 478–480, and 485–488. Residues 448–559 are 8 X 3 AA repeats of R-G-G; it reads RGGRGGYGYP…VRGARGGRGG (112 aa). Positions 460-488 are 3 X 4 AA repeats of Y-Y-G-Y; the sequence is YYGYEDYYDYYGYDYHNYRGGYEDPYYGY. Arg496 is modified (omega-N-methylarginine; by PRMT1). Positions 497–623 are disordered; that stretch reads GRGGRGARGA…YQDTFGQQWK (127 aa). The stretch at 498–500 is one 1-4 repeat; sequence RGG. Low complexity predominate over residues 504–522; sequence RGAAPSRGRGAAPPRGRAG. Arg510 carries the post-translational modification Asymmetric dimethylarginine; by PRMT1. An asymmetric dimethylarginine; by PRMT1; alternate mark is found at Arg518, Arg526, Arg536, and Arg539. Omega-N-methylarginine; by PRMT1; alternate is present on residues Arg518, Arg526, Arg536, and Arg539. Residues 518–549 form an interaction with SMN region; the sequence is RGRAGYSQRGGPGSARGVRGARGGAQQQRGRG. The stretch at 526–528 is one 1-5 repeat; that stretch reads RGG. 3 tandem repeats follow at residues 539-541, 554-556, and 557-559. A compositionally biased stretch (gly residues) spans 550–562; sequence VRGARGGRGGNVG. A Bipartite nuclear localization signal motif is present at residues 564 to 578; it reads KRKADGYNQPDSKRR. Over residues 580–595 the composition is skewed to polar residues; sequence TNNQNWGSQPIAQQPL. Ser587 is subject to Phosphoserine. Lys607 is covalently cross-linked (Glycyl lysine isopeptide (Lys-Gly) (interchain with G-Cter in SUMO2)). A compositionally biased stretch (polar residues) spans 611–623; that stretch reads QEFYQDTFGQQWK.

Isoform 1 is a component of the APOB mRNA editosome complex and interacts with APOBEC1 and A1CF (APOBEC1 complementation factor). Part of a complex associated with the FOS mCRD domain and consisting of PABPC1, PAIP1, CSDE1/UNR, HNRPD and SYNCRIP. Isoform 3 interacts with HNRPR. Interacts with POLR2A hyperphosphorylated C-terminal domain. Isoform 1, isoform 2 and isoform 3 interact with SMN. Isoform 3 interacts through its C-terminal domain with SYT7, SYT8 and SYT9. The non-phosphorylated and phosphorylated forms are colocalized with PAIP1 in polysomes. Interacts with HABP4. Identified in a histone pre-mRNA complex, at least composed of ERI1, LSM11, SLBP, SNRPB, SYNCRIP and YBX1. Identified in the spliceosome C complex. Component of the coding region determinant (CRD)-mediated complex, composed of DHX9, HNRNPU, IGF2BP1, SYNCRIP and YBX1. Identified in a mRNP complex, at least composed of DHX9, DDX3X, ELAVL1, HNRNPU, IGF2BP1, ILF3, PABPC1, PCBP2, PTBP2, STAU1, STAU2, SYNCRIP and YBX1. Identified in a mRNP granule complex, at least composed of ACTB, ACTN4, DHX9, ERG, HNRNPA1, HNRNPA2B1, HNRNPAB, HNRNPD, HNRNPL, HNRNPR, HNRNPU, HSPA1, HSPA8, IGF2BP1, ILF2, ILF3, NCBP1, NCL, PABPC1, PABPC4, PABPN1, RPLP0, RPS3, RPS3A, RPS4X, RPS8, RPS9, SYNCRIP, YBX1 and untranslated mRNAs. Interacts with GTPBP1. Component of the GAIT complex; in humans the complex assembly seems to be a two-step process in which EPRS1 first associates with SYNCRIP to form a pre-GAIT complex which is deficient in GAIT element binding. As to quaternary structure, (Microbial infection) Interacts with minute virus of mice (MVM) NS1 protein. In terms of assembly, (Microbial infection) Interacts with herpes virus 8/HHV-8 protein vIRF-1; this interaction induces ubiquitination and degradation of SYNCRIP. Phosphorylated on tyrosine. The membrane-bound form found in microsomes is phosphorylated in vitro by insulin receptor tyrosine kinase (INSR). Phosphorylation is inhibited upon binding to RNA, whereas the cytoplasmic form is poorly phosphorylated. As to expression, ubiquitously expressed. Detected in heart, brain, pancreas, placenta, spleen, lung, liver, skeletal muscle, kidney, thymus, prostate, uterus, small intestine, colon, peripheral blood and testis.

The protein resides in the cytoplasm. The protein localises to the microsome. Its subcellular location is the endoplasmic reticulum. It localises to the nucleus. It is found in the nucleoplasm. Functionally, heterogenous nuclear ribonucleoprotein (hnRNP) implicated in mRNA processing mechanisms. Component of the CRD-mediated complex that promotes MYC mRNA stability. Isoform 1, isoform 2 and isoform 3 are associated in vitro with pre-mRNA, splicing intermediates and mature mRNA protein complexes. Isoform 1 binds to apoB mRNA AU-rich sequences. Isoform 1 is part of the APOB mRNA editosome complex and may modulate the postranscriptional C to U RNA-editing of the APOB mRNA through either by binding to A1CF (APOBEC1 complementation factor), to APOBEC1 or to RNA itself. May be involved in translationally coupled mRNA turnover. Implicated with other RNA-binding proteins in the cytoplasmic deadenylation/translational and decay interplay of the FOS mRNA mediated by the major coding-region determinant of instability (mCRD) domain. Interacts in vitro preferentially with poly(A) and poly(U) RNA sequences. Isoform 3 may be involved in cytoplasmic vesicle-based mRNA transport through interaction with synaptotagmins. Component of the GAIT (gamma interferon-activated inhibitor of translation) complex which mediates interferon-gamma-induced transcript-selective translation inhibition in inflammation processes. Upon interferon-gamma activation assembles into the GAIT complex which binds to stem loop-containing GAIT elements in the 3'-UTR of diverse inflammatory mRNAs (such as ceruplasmin) and suppresses their translation; seems not to be essential for GAIT complex function. This chain is Heterogeneous nuclear ribonucleoprotein Q (SYNCRIP), found in Homo sapiens (Human).